The primary structure comprises 264 residues: Spermidine/putrescine transport system permease protein PotC (264 aa).

The Cytoplasmic portion of the chain corresponds to 1–7 (MIGRLLR). Residues 8–27 (GGFMTAIYAYLYIPIIILIV) traverse the membrane as a helical segment. Topologically, residues 28–65 (NSFNSSRFGINWQGFTTKWYSLLMNNDSLLQAAQHSLT) are periplasmic. The ABC transmembrane type-1 domain maps to 60 to 248 (AQHSLTMAVF…VLSLVMVIAS (189 aa)). The helical transmembrane segment at 66–85 (MAVFSATFATLIGSLTAVAL) threads the bilayer. The Cytoplasmic portion of the chain corresponds to 86–100 (YRYRFRGKPFVSGML). Residues 101-120 (FVVMMSPDIVMAISLLVLFM) form a helical membrane-spanning segment. Residues 121 to 128 (LLGIQLGF) lie on the Periplasmic side of the membrane. The helical transmembrane segment at 129 to 148 (WSLLFSHITFCLPFVVVTVY) threads the bilayer. Residues 149 to 176 (SRLKGFDVRMLEAAKDLGASEFTILRKI) are Cytoplasmic-facing. Residues 177-196 (ILPLAMPAVAAGWVLSFTLS) traverse the membrane as a helical segment. Topologically, residues 197 to 231 (MDDVVVSSFVTGPSYEILPLKIYSMVKVGVSPEVN) are periplasmic. Residues 232 to 251 (ALATILLVLSLVMVIASQLI) traverse the membrane as a helical segment. The Cytoplasmic segment spans residues 252 to 264 (ARDKTKGNTGDVK).

Belongs to the binding-protein-dependent transport system permease family. CysTW subfamily.

It localises to the cell inner membrane. Required for the activity of the bacterial periplasmic transport system of putrescine and spermidine. The protein is Spermidine/putrescine transport system permease protein PotC (potC) of Escherichia coli O157:H7.